The following is a 209-amino-acid chain: Thiamine-phosphate synthase (209 aa).

4-amino-2-methyl-5-(diphosphooxymethyl)pyrimidine contacts are provided by residues 38–42 (QYRDK) and N70. Residues D71 and D89 each contribute to the Mg(2+) site. A 4-amino-2-methyl-5-(diphosphooxymethyl)pyrimidine-binding site is contributed by T108. 135–137 (SNT) contacts 2-[(2R,5Z)-2-carboxy-4-methylthiazol-5(2H)-ylidene]ethyl phosphate. K138 is a 4-amino-2-methyl-5-(diphosphooxymethyl)pyrimidine binding site. Residue G165 participates in 2-[(2R,5Z)-2-carboxy-4-methylthiazol-5(2H)-ylidene]ethyl phosphate binding.

Belongs to the thiamine-phosphate synthase family. Mg(2+) is required as a cofactor.

The enzyme catalyses 2-[(2R,5Z)-2-carboxy-4-methylthiazol-5(2H)-ylidene]ethyl phosphate + 4-amino-2-methyl-5-(diphosphooxymethyl)pyrimidine + 2 H(+) = thiamine phosphate + CO2 + diphosphate. The catalysed reaction is 2-(2-carboxy-4-methylthiazol-5-yl)ethyl phosphate + 4-amino-2-methyl-5-(diphosphooxymethyl)pyrimidine + 2 H(+) = thiamine phosphate + CO2 + diphosphate. It carries out the reaction 4-methyl-5-(2-phosphooxyethyl)-thiazole + 4-amino-2-methyl-5-(diphosphooxymethyl)pyrimidine + H(+) = thiamine phosphate + diphosphate. Its pathway is cofactor biosynthesis; thiamine diphosphate biosynthesis; thiamine phosphate from 4-amino-2-methyl-5-diphosphomethylpyrimidine and 4-methyl-5-(2-phosphoethyl)-thiazole: step 1/1. Its function is as follows. Condenses 4-methyl-5-(beta-hydroxyethyl)thiazole monophosphate (THZ-P) and 2-methyl-4-amino-5-hydroxymethyl pyrimidine pyrophosphate (HMP-PP) to form thiamine monophosphate (TMP). This chain is Thiamine-phosphate synthase, found in Ectopseudomonas mendocina (strain ymp) (Pseudomonas mendocina).